We begin with the raw amino-acid sequence, 134 residues long: TSC22 domain family protein 3 (134 aa).

An AP1-binding region spans residues 1 to 60 (MNTEMYQTPMEVAVYQLHNFSISFFSSLLGGDVVSVKLDNSASGASVVALDNKIEQAMDL). Residues 76–97 (LKEQIRELVEKNSQLERENTLL) form a leucine-zipper region. Positions 101 to 134 (ASPEQLEKFQSRLSPEEPAPEAPETPEAPGGSAV) are disordered. Ser102 carries the post-translational modification Phosphoserine. The residue at position 125 (Thr125) is a Phosphothreonine. The segment covering 125–134 (TPEAPGGSAV) has biased composition (low complexity).

Belongs to the TSC-22/Dip/Bun family. As to quaternary structure, can form homodimers, however it is likely to function as a monomer. Interacts with NFKB1. Interacts (via N-terminus) with JUN and FOS; these interactions inhibit the binding of active AP1 to its target DNA. Interacts with MYOD1. Interacts with HDAC1; this interaction affects HDAC1 activity on MYOG promoter and thus inhibits MYOD1 transcriptional activity.

The protein localises to the cytoplasm. Its subcellular location is the nucleus. Protects T-cells from IL2 deprivation-induced apoptosis through the inhibition of FOXO3A transcriptional activity that leads to the down-regulation of the pro-apoptotic factor BCL2L11. In macrophages, plays a role in the anti-inflammatory and immunosuppressive effects of glucocorticoids and IL10. In T-cells, inhibits anti-CD3-induced NFKB1 nuclear translocation and thereby NFKB1 DNA-binding activities. In vitro, suppresses AP-1 transcription factor complex DNA-binding activities. The chain is TSC22 domain family protein 3 (Tsc22d3) from Rattus norvegicus (Rat).